The primary structure comprises 210 residues: MYENVFVIDHPLIQHKISLIRDENTGSKEFRELVGEIAMLMAYEVTRDLPLEEIEVKTPIAVAKTKVIAGKKLGIIPILRAGLVMADGMLKLIPTAKVGHIGIYRDPETLKPVEYYCKLPSDIAERDLIVVDPMLATGGSASAAIHFLKERGAQSIKLVNLIAAPEGIKAVHKDHPEVPIYVASIDQGLNEHGYIVPGLGDAGDRLFGTK.

5-phospho-alpha-D-ribose 1-diphosphate-binding positions include R80, R105, and D132–S140. Uracil contacts are provided by residues I195 and G200 to A202. D201 contacts 5-phospho-alpha-D-ribose 1-diphosphate.

It belongs to the UPRTase family. Mg(2+) is required as a cofactor.

It carries out the reaction UMP + diphosphate = 5-phospho-alpha-D-ribose 1-diphosphate + uracil. Its pathway is pyrimidine metabolism; UMP biosynthesis via salvage pathway; UMP from uracil: step 1/1. With respect to regulation, allosterically activated by GTP. In terms of biological role, catalyzes the conversion of uracil and 5-phospho-alpha-D-ribose 1-diphosphate (PRPP) to UMP and diphosphate. This chain is Uracil phosphoribosyltransferase, found in Caldanaerobacter subterraneus subsp. tengcongensis (strain DSM 15242 / JCM 11007 / NBRC 100824 / MB4) (Thermoanaerobacter tengcongensis).